We begin with the raw amino-acid sequence, 121 residues long: Cell division protein FtsL (121 aa).

Residues 1–34 are Cytoplasmic-facing; it reads MISRVTEALSKVKGSIGSNERHALPGVIGDDLLR. A helical transmembrane segment spans residues 35-57; it reads FGKLPLCLFICIILTAVTVVTTA. Residues 58-121 are Periplasmic-facing; it reads HHTRLLTAQR…PSQENIVVQK (64 aa).

The protein belongs to the FtsL family. In terms of assembly, part of a complex composed of FtsB, FtsL and FtsQ.

It localises to the cell inner membrane. Its function is as follows. Essential cell division protein. May link together the upstream cell division proteins, which are predominantly cytoplasmic, with the downstream cell division proteins, which are predominantly periplasmic. The protein is Cell division protein FtsL of Salmonella typhimurium (strain LT2 / SGSC1412 / ATCC 700720).